A 222-amino-acid chain; its full sequence is Peptide methionine sulfoxide reductase MsrA (222 aa).

Residue cysteine 60 is part of the active site.

Belongs to the MsrA Met sulfoxide reductase family.

It catalyses the reaction L-methionyl-[protein] + [thioredoxin]-disulfide + H2O = L-methionyl-(S)-S-oxide-[protein] + [thioredoxin]-dithiol. The catalysed reaction is [thioredoxin]-disulfide + L-methionine + H2O = L-methionine (S)-S-oxide + [thioredoxin]-dithiol. Functionally, has an important function as a repair enzyme for proteins that have been inactivated by oxidation. Catalyzes the reversible oxidation-reduction of methionine sulfoxide in proteins to methionine. This Pseudomonas putida (strain GB-1) protein is Peptide methionine sulfoxide reductase MsrA.